Consider the following 147-residue polypeptide: Phosphoribosyl-AMP cyclohydrolase (147 aa).

Residue Asp-91 participates in Mg(2+) binding. Cys-92 lines the Zn(2+) pocket. 2 residues coordinate Mg(2+): Asp-93 and Asp-95. Residues Cys-109 and Cys-116 each contribute to the Zn(2+) site.

It belongs to the PRA-CH family. As to quaternary structure, homodimer. Requires Mg(2+) as cofactor. Zn(2+) serves as cofactor.

Its subcellular location is the cytoplasm. The catalysed reaction is 1-(5-phospho-beta-D-ribosyl)-5'-AMP + H2O = 1-(5-phospho-beta-D-ribosyl)-5-[(5-phospho-beta-D-ribosylamino)methylideneamino]imidazole-4-carboxamide. It functions in the pathway amino-acid biosynthesis; L-histidine biosynthesis; L-histidine from 5-phospho-alpha-D-ribose 1-diphosphate: step 3/9. Its function is as follows. Catalyzes the hydrolysis of the adenine ring of phosphoribosyl-AMP. The chain is Phosphoribosyl-AMP cyclohydrolase from Rhodopseudomonas palustris (strain BisA53).